The chain runs to 573 residues: Ribonuclease J (573 aa).

A disordered region spans residues 1 to 29 (MENQERKPRRRRRRRPQEGSQGGPQDHVE). Residues H93, H95, D97, H98, H168, and D190 each contribute to the Zn(2+) site. Residues 259 to 261 (ASH) and 390 to 394 (HASGH) contribute to the substrate site. H416 provides a ligand contact to Zn(2+).

Belongs to the metallo-beta-lactamase superfamily. RNA-metabolizing metallo-beta-lactamase-like family. Bacterial RNase J subfamily. Homodimer. May be a subunit of the RNA degradosome. Zn(2+) is required as a cofactor.

It is found in the cytoplasm. In terms of biological role, an RNase that has endonuclease and possibly 5'-3' exonuclease activity. Probably involved in maturation of rRNA and in some organisms also mRNA maturation and/or decay. The polypeptide is Ribonuclease J (Thermus thermophilus (strain ATCC BAA-163 / DSM 7039 / HB27)).